The following is a 541-amino-acid chain: Membrane protein insertase YidC (541 aa).

The helical transmembrane segment at 6–26 threads the bilayer; sequence SLLVLALIFISFLVYQQWQLD. The interval 34-56 is disordered; sequence EQTTSITATSDVPASSPSNSQAI. Transmembrane regions (helical) follow at residues 337–357, 416–436, 454–474, and 495–515; these read FWLL…IICV, LGGC…YWTF, LSAQ…MFLL, and PLVF…YWLV.

It belongs to the OXA1/ALB3/YidC family. Type 1 subfamily. As to quaternary structure, interacts with the Sec translocase complex via SecD. Specifically interacts with transmembrane segments of nascent integral membrane proteins during membrane integration.

It is found in the cell inner membrane. Functionally, required for the insertion and/or proper folding and/or complex formation of integral membrane proteins into the membrane. Involved in integration of membrane proteins that insert both dependently and independently of the Sec translocase complex, as well as at least some lipoproteins. Aids folding of multispanning membrane proteins. This is Membrane protein insertase YidC from Haemophilus influenzae (strain ATCC 51907 / DSM 11121 / KW20 / Rd).